Reading from the N-terminus, the 226-residue chain is Cytidylate kinase (226 aa).

Residue 10 to 18 participates in ATP binding; sequence GPASSGKST.

This sequence belongs to the cytidylate kinase family. Type 1 subfamily.

The protein localises to the cytoplasm. It catalyses the reaction CMP + ATP = CDP + ADP. The enzyme catalyses dCMP + ATP = dCDP + ADP. The polypeptide is Cytidylate kinase (Streptococcus pyogenes serotype M1).